The following is a 71-amino-acid chain: Small ribosomal subunit protein bS21 (71 aa).

It belongs to the bacterial ribosomal protein bS21 family.

The chain is Small ribosomal subunit protein bS21 from Pseudoalteromonas atlantica (strain T6c / ATCC BAA-1087).